The following is a 406-amino-acid chain: Probable endo-xylogalacturonan hydrolase A (406 aa).

A signal peptide spans 1–18; sequence MISLNSIFLLSLVGLSRA. Positions 20–49 are disordered; sequence PSRSETSPDRTIKPRAACTPTAGGSSSTDD. 6 PbH1 repeats span residues 183–213, 214–235, 237–257, 266–289, 299–320, and 368–390; these read TSNA…DIGA, STYV…AFKP, ANYV…SVGS, VQNV…KTYP, VKNA…QIQS, and TCDV…ILCG. Aspartate 228 (proton donor) is an active-site residue. N-linked (GlcNAc...) asparagine glycosylation occurs at asparagine 244. Histidine 251 is a catalytic residue. N-linked (GlcNAc...) asparagine glycosylation is found at asparagine 273, asparagine 278, and asparagine 301.

The protein belongs to the glycosyl hydrolase 28 family.

It localises to the secreted. Pectinolytic enzyme involved in the degradation of xylogalacturonan (xga), a galacturonan backbone heavily substituted with xylose, and which is one important component of the hairy regions of pectin. Activity requires a galacturonic acid backbone substituted with xylose. In Aspergillus oryzae (strain ATCC 42149 / RIB 40) (Yellow koji mold), this protein is Probable endo-xylogalacturonan hydrolase A (xghA).